We begin with the raw amino-acid sequence, 454 residues long: MARLKPLSGFPEFLPSGQMVENHVTRILEETFELHGFAPIRTRAVEPMEQLTRKGEIDKEVYVVDRLHADPHDTRSGKDRLGLHFDLTVPFARYVLENAGHLYFPFRRYQIQKVWRGERPQEGRYREFTQADIDIVGDQTLAEHHDVETPLVMLSALERLHTELGFPTVTMHVNNRKLSEGFYRGLGIADPMAVLQRVDKYDKIGPDAVRKLLVDELNLSDDAAAKCVALASIQSTDDSFIAKVRELGVANDMLEEGLDSLNRVVAAVNKAVPGRMVANLKIARGLDYYTGTVYETELTGHESMGSVCSGGRYESLASDGKHVYPGVGISLGLTRLLAPILSRGELSSSRSVPSAVLVAVNTEEDRATSEVIASALRSRGIPCEVAPKADKFGKQIKHADRRGIPFVWFPGVKHADYRDADTVKDIRSGDQVEADAGAWNPPTEDLHPGVIGTW.

The segment at 434-454 (ADAGAWNPPTEDLHPGVIGTW) is disordered.

This sequence belongs to the class-II aminoacyl-tRNA synthetase family. Homodimer.

It is found in the cytoplasm. It catalyses the reaction tRNA(His) + L-histidine + ATP = L-histidyl-tRNA(His) + AMP + diphosphate + H(+). The protein is Histidine--tRNA ligase (hisS) of Cutibacterium acnes (strain DSM 16379 / KPA171202) (Propionibacterium acnes).